We begin with the raw amino-acid sequence, 409 residues long: Elongation factor 1-gamma (409 aa).

Residues 2 to 81 (SVGTVYGKIG…YLASLNKTRA (80 aa)) enclose the GST N-terminal domain. One can recognise a GST C-terminal domain in the interval 86-212 (TAEEKAKVLQ…EPLKFIDQPL (127 aa)). Over residues 219–248 (NKEAAPAKKAEKKKDEKKKNAPKPQAERPA) the composition is skewed to basic and acidic residues. Positions 219-261 (NKEAAPAKKAEKKKDEKKKNAPKPQAERPAKPPKHPLASAPNG) are disordered. Residues 251–409 (PKHPLASAPN…REVADGKVCK (159 aa)) form the EF-1-gamma C-terminal domain.

As to quaternary structure, EF-1 is composed of four subunits: alpha, beta, delta, and gamma.

Probably plays a role in anchoring the complex to other cellular components. The polypeptide is Elongation factor 1-gamma (tef3) (Schizosaccharomyces pombe (strain 972 / ATCC 24843) (Fission yeast)).